The sequence spans 180 residues: Prothoracicotropic hormone (180 aa).

An N-terminal signal peptide occupies residues 1–15 (MKLLILCVMVHGLLA). Positions 16–64 (EGPGQVLWKEQVVAPEFLLDDREDIASNRNAFFYEDKRSFRPEGLGEQV) are excised as a propeptide. Intrachain disulfides connect cysteine 88–cysteine 123 and cysteine 111–cysteine 175.

Homodimer; disulfide-linked.

It localises to the secreted. Functionally, PTTH is a brain secretory polypeptide of insects which stimulates the prothoracic glands to produce and release ecdysone, the steroid essential to insect development. The polypeptide is Prothoracicotropic hormone (Camponotus floridanus (Florida carpenter ant)).